The sequence spans 546 residues: Chaperonin GroEL (546 aa).

ATP is bound by residues 29–32, Lys-50, 86–90, Gly-414, and Asp-492; these read TMGP and DGTTT.

Belongs to the chaperonin (HSP60) family. As to quaternary structure, forms a cylinder of 14 subunits composed of two heptameric rings stacked back-to-back. Interacts with the co-chaperonin GroES.

The protein resides in the cytoplasm. It catalyses the reaction ATP + H2O + a folded polypeptide = ADP + phosphate + an unfolded polypeptide.. Functionally, together with its co-chaperonin GroES, plays an essential role in assisting protein folding. The GroEL-GroES system forms a nano-cage that allows encapsulation of the non-native substrate proteins and provides a physical environment optimized to promote and accelerate protein folding. The sequence is that of Chaperonin GroEL from Helicobacter pylori (strain P12).